A 348-amino-acid chain; its full sequence is Putative agmatine deiminase (348 aa).

The Amidino-cysteine intermediate role is filled by cysteine 335.

The protein belongs to the agmatine deiminase family.

The catalysed reaction is agmatine + H2O = N-carbamoylputrescine + NH4(+). This Legionella pneumophila subsp. pneumophila (strain Philadelphia 1 / ATCC 33152 / DSM 7513) protein is Putative agmatine deiminase.